The chain runs to 359 residues: Small ribosomal subunit biogenesis GTPase RsgA (359 aa).

The CP-type G domain maps to 101–259 (KRKGSQAIAS…LMDNPGIREV (159 aa)). Residues 149–152 (NKKD) and 201–209 (GSSGAGKST) each bind GTP. Zn(2+) contacts are provided by C284, C289, H291, and C297. The tract at residues 331–359 (DPEEARKKKQKDKQMSKALQKRLKDKGRK) is disordered. The span at 349–359 (LQKRLKDKGRK) shows a compositional bias: basic residues.

This sequence belongs to the TRAFAC class YlqF/YawG GTPase family. RsgA subfamily. As to quaternary structure, monomer. Associates with 30S ribosomal subunit, binds 16S rRNA. The cofactor is Zn(2+).

The protein localises to the cytoplasm. One of several proteins that assist in the late maturation steps of the functional core of the 30S ribosomal subunit. Helps release RbfA from mature subunits. May play a role in the assembly of ribosomal proteins into the subunit. Circularly permuted GTPase that catalyzes slow GTP hydrolysis, GTPase activity is stimulated by the 30S ribosomal subunit. The chain is Small ribosomal subunit biogenesis GTPase RsgA from Leptospira interrogans serogroup Icterohaemorrhagiae serovar Lai (strain 56601).